An 853-amino-acid polypeptide reads, in one-letter code: DNA mismatch repair protein MutS (853 aa).

614 to 621 provides a ligand contact to ATP; it reads GPNMGGKS.

It belongs to the DNA mismatch repair MutS family.

In terms of biological role, this protein is involved in the repair of mismatches in DNA. It is possible that it carries out the mismatch recognition step. This protein has a weak ATPase activity. The chain is DNA mismatch repair protein MutS from Shigella dysenteriae serotype 1 (strain Sd197).